Here is an 806-residue protein sequence, read N- to C-terminus: Protein translocase subunit SecA 2 (806 aa).

Residues Gln-122, Gly-140–Thr-144, and Asp-533 contribute to the ATP site.

It belongs to the SecA family. In terms of assembly, monomer and homodimer. Part of the essential Sec protein translocation apparatus which comprises SecA, SecYEG and auxiliary proteins SecDF. Other proteins may also be involved.

The protein localises to the cell membrane. Its subcellular location is the cytoplasm. It carries out the reaction ATP + H2O + cellular proteinSide 1 = ADP + phosphate + cellular proteinSide 2.. Part of the Sec protein translocase complex. Interacts with the SecYEG preprotein conducting channel. Has a central role in coupling the hydrolysis of ATP to the transfer of proteins into and across the cell membrane, serving as an ATP-driven molecular motor driving the stepwise translocation of polypeptide chains across the membrane. This chain is Protein translocase subunit SecA 2, found in Mycobacterium ulcerans (strain Agy99).